Here is a 412-residue protein sequence, read N- to C-terminus: Tyrosine--tRNA ligase (412 aa).

Tyr-38 is an L-tyrosine binding site. A 'HIGH' region motif is present at residues 43–52 (CTANSLHIGS). L-tyrosine-binding residues include Tyr-170 and Gln-174. Positions 230–234 (KMGKT) match the 'KMSKS' region motif. Lys-233 is a binding site for ATP. Residues 343–409 (IPISKLLHMW…CGKKRRLKVV (67 aa)) enclose the S4 RNA-binding domain.

It belongs to the class-I aminoacyl-tRNA synthetase family. TyrS type 1 subfamily. Homodimer.

It localises to the cytoplasm. The catalysed reaction is tRNA(Tyr) + L-tyrosine + ATP = L-tyrosyl-tRNA(Tyr) + AMP + diphosphate + H(+). In terms of biological role, catalyzes the attachment of tyrosine to tRNA(Tyr) in a two-step reaction: tyrosine is first activated by ATP to form Tyr-AMP and then transferred to the acceptor end of tRNA(Tyr). In Anaplasma phagocytophilum (strain HZ), this protein is Tyrosine--tRNA ligase.